A 198-amino-acid polypeptide reads, in one-letter code: uncharacterized protein (198 aa).

The protein localises to the plastid. The protein resides in the chloroplast. This is an uncharacterized protein from Antithamnion sp. (Red alga).